A 662-amino-acid chain; its full sequence is Putative cysteine-rich receptor-like protein kinase 16 (662 aa).

Residues 1–26 (MIFIMKLKNLLPIFCFFLVSFSISSA) form the signal peptide. Gnk2-homologous domains lie at 27 to 131 (QKCG…NRSF) and 137 to 244 (MTPF…LYQF). The Extracellular segment spans residues 27-277 (QKCGKTGLFK…DDGGKISTRN (251 aa)). 7 N-linked (GlcNAc...) asparagine glycosylation sites follow: N55, N64, N106, N128, N145, N152, and N206. Residues 278–298 (ILGITVALAFFITVLLVLGYA) form a helical membrane-spanning segment. The Cytoplasmic portion of the chain corresponds to 299 to 662 (LSRRRKAYQE…DASITSVDLR (364 aa)). Residues 335–612 (FQKSNKLGHG…VFQMLTNTFL (278 aa)) enclose the Protein kinase domain. Residues 341 to 349 (LGHGGFGEV) and K363 contribute to the ATP site. D460 functions as the Proton acceptor in the catalytic mechanism.

Belongs to the protein kinase superfamily. Ser/Thr protein kinase family. CRK subfamily.

It localises to the membrane. It carries out the reaction L-seryl-[protein] + ATP = O-phospho-L-seryl-[protein] + ADP + H(+). The enzyme catalyses L-threonyl-[protein] + ATP = O-phospho-L-threonyl-[protein] + ADP + H(+). This Arabidopsis thaliana (Mouse-ear cress) protein is Putative cysteine-rich receptor-like protein kinase 16 (CRK16).